A 508-amino-acid polypeptide reads, in one-letter code: Cytochrome P450 4A12B (508 aa).

The first 37 residues, 1 to 37 (MSASALSSIRFPGSISEYLQVASVLSLLLLLFKTAQL), serve as a signal peptide directing secretion. Residues E319 and C455 each coordinate heme.

Belongs to the cytochrome P450 family. It depends on heme as a cofactor. In terms of tissue distribution, expressed in lung, but almost undetectable in the kidneys of five different strains.

The protein localises to the endoplasmic reticulum membrane. The protein resides in the microsome membrane. The catalysed reaction is an organic molecule + reduced [NADPH--hemoprotein reductase] + O2 = an alcohol + oxidized [NADPH--hemoprotein reductase] + H2O + H(+). The enzyme catalyses dodecanoate + reduced [NADPH--hemoprotein reductase] + O2 = 11-hydroxydodecanoate + oxidized [NADPH--hemoprotein reductase] + H2O + H(+). It carries out the reaction dodecanoate + reduced [NADPH--hemoprotein reductase] + O2 = 12-hydroxydodecanoate + oxidized [NADPH--hemoprotein reductase] + H2O + H(+). It catalyses the reaction (5Z,8Z,11Z,14Z)-eicosatetraenoate + reduced [NADPH--hemoprotein reductase] + O2 = 18-hydroxy-(5Z,8Z,11Z,14Z)-eicosatetraenoate + oxidized [NADPH--hemoprotein reductase] + H2O + H(+). The catalysed reaction is (5Z,8Z,11Z,14Z)-eicosatetraenoate + reduced [NADPH--hemoprotein reductase] + O2 = 19-hydroxy-(5Z,8Z,11Z,14Z)-eicosatetraenoate + oxidized [NADPH--hemoprotein reductase] + H2O + H(+). The enzyme catalyses (5Z,8Z,11Z,14Z)-eicosatetraenoate + reduced [NADPH--hemoprotein reductase] + O2 = 20-hydroxy-(5Z,8Z,11Z,14Z)-eicosatetraenoate + oxidized [NADPH--hemoprotein reductase] + H2O + H(+). It carries out the reaction (5Z,8Z,11Z,14Z,17Z)-eicosapentaenoate + reduced [NADPH--hemoprotein reductase] + O2 = 19-hydroxy-(5Z,8Z,11Z,14Z,17Z)-eicosapentaenoate + oxidized [NADPH--hemoprotein reductase] + H2O + H(+). It catalyses the reaction (5Z,8Z,11Z,14Z,17Z)-eicosapentaenoate + reduced [NADPH--hemoprotein reductase] + O2 = 20-hydroxy-(5Z,8Z,11Z,14Z,17Z)-eicosapentaenoate + oxidized [NADPH--hemoprotein reductase] + H2O + H(+). The catalysed reaction is (5Z,8Z,11Z,14Z,17Z)-eicosapentaenoate + reduced [NADPH--hemoprotein reductase] + O2 = (17S,18R)-epoxy-(5Z,8Z,11Z,14Z)-eicosatetraenoate + oxidized [NADPH--hemoprotein reductase] + H2O + H(+). The enzyme catalyses (5Z,8Z,11Z,14Z,17Z)-eicosapentaenoate + reduced [NADPH--hemoprotein reductase] + O2 = (17R,18S)-epoxy-(5Z,8Z,11Z,14Z)-eicosatetraenoate + oxidized [NADPH--hemoprotein reductase] + H2O + H(+). The protein operates within lipid metabolism; fatty acid metabolism. With respect to regulation, activated by cytochrome b5. The Vmax almost doubles in the presence of cytochrome b5. A cytochrome P450 monooxygenase involved in the metabolism of fatty acids and their oxygenated derivatives (oxylipins). Mechanistically, uses molecular oxygen inserting one oxygen atom into a substrate, and reducing the second into a water molecule, with two electrons provided by NADPH via cytochrome P450 reductase (CPR; NADPH-ferrihemoprotein reductase). Catalyzes predominantly the oxidation of the terminal carbon (omega-oxidation) of saturated and unsaturated fatty acids. May act as a major omega-hydroxylase for dodecanoic (lauric) acid in kidney. Participates in omega-hydroxylation of (5Z,8Z,11Z,14Z)-eicosatetraenoic acid (arachidonate) to 20-hydroxyeicosatetraenoic acid (20-HETE), a signaling molecule acting both as vasoconstrictive and natriuretic with overall effect on arterial blood pressure. Acts as an omega-hydroxylase and epoxidase toward (5Z,8Z,11Z,14Z,17Z)-eicosapentaenoc acid (EPA). Catalyzes the epoxidation of the last double bond of EPA with no preferred stereoselectivity, producing both (R,S) and (S,R) stereoisomers. Can also catalyze the omega-1 and omega-2 oxidation of fatty acids with lower efficiency. In Mus musculus (Mouse), this protein is Cytochrome P450 4A12B.